The chain runs to 485 residues: Threonine synthase-like 2 (485 aa).

Residue K113 is modified to N6-(pyridoxal phosphate)lysine.

This sequence belongs to the threonine synthase family. Requires pyridoxal 5'-phosphate as cofactor.

Acts as a catabolic phospho-lyase on both gamma- and beta-phosphorylated substrates. Degrades O-phospho-threonine (PThr) to alpha-ketobutyrate, ammonia and phosphate. This is Threonine synthase-like 2 (Thnsl2) from Rattus norvegicus (Rat).